The primary structure comprises 303 residues: Taste receptor type 2 member 13 (303 aa).

The Extracellular segment spans residues 1–7 (MESALLS). A helical membrane pass occupies residues 8–28 (ILTLVIIAEFVIGNLSNGFXV). The Cytoplasmic segment spans residues 29-55 (LINCIDWVSKRQLSSVDKILTFLAISR). Residues 56–76 (IGLIWELLVSWFLGLHYLAIF) form a helical membrane-spanning segment. Topologically, residues 77–85 (VSGTGLRIM) are extracellular. Residues 86–106 (IFSWVVSNHFSLWLATILSIF) form a helical membrane-spanning segment. Over 107-128 (YLLKIASFSSPAFLYLKWRVNQ) the chain is Cytoplasmic. A helical membrane pass occupies residues 129–149 (VILMILLGTLVFLFLNLIQIN). The Extracellular portion of the chain corresponds to 150 to 184 (IHIKDWLDRCERNTIWNFSMSGLPTFSVPVKFTMT). Asparagine 166 carries N-linked (GlcNAc...) asparagine glycosylation. The chain crosses the membrane as a helical span at residues 185–205 (MFSLAPFTVALISFLLLIFSL). The Cytoplasmic portion of the chain corresponds to 206 to 232 (RKHLQKMQLNYKGHREPRTKAHINALK). The helical transmembrane segment at 233–253 (IVISFLLLYASFFLCILISWI) threads the bilayer. Residues 254 to 261 (SELYQNTL) are Extracellular-facing. A helical transmembrane segment spans residues 262–282 (IHMFCQTIGVFYPSSHSFLLI). Over 283–303 (LGNPKLRQASLLVAAKVWAKR) the chain is Cytoplasmic.

Belongs to the G-protein coupled receptor T2R family.

It localises to the membrane. Its function is as follows. Receptor that may play a role in the perception of bitterness and is gustducin-linked. May play a role in sensing the chemical composition of the gastrointestinal content. The activity of this receptor may stimulate alpha gustducin, mediate PLC-beta-2 activation and lead to the gating of TRPM5. This chain is Taste receptor type 2 member 13 (TAS2R13), found in Papio hamadryas (Hamadryas baboon).